Consider the following 224-residue polypeptide: Small ribosomal subunit protein uS7 (224 aa).

The protein belongs to the universal ribosomal protein uS7 family. As to quaternary structure, part of the 30S ribosomal subunit.

Its function is as follows. One of the primary rRNA binding proteins, it binds directly to 16S rRNA where it nucleates assembly of the head domain of the 30S subunit. Is located at the subunit interface close to the decoding center. This is Small ribosomal subunit protein uS7 from Caldivirga maquilingensis (strain ATCC 700844 / DSM 13496 / JCM 10307 / IC-167).